Reading from the N-terminus, the 131-residue chain is Profilin-4 (131 aa).

Belongs to the profilin family. Occurs in many kinds of cells as a complex with monomeric actin in a 1:1 ratio.

The protein resides in the cytoplasm. It localises to the cytoskeleton. Functionally, binds to actin and affects the structure of the cytoskeleton. At high concentrations, profilin prevents the polymerization of actin, whereas it enhances it at low concentrations. By binding to PIP2, it inhibits the formation of IP3 and DG. The sequence is that of Profilin-4 from Hevea brasiliensis (Para rubber tree).